The sequence spans 117 residues: Large ribosomal subunit protein bL20c (117 aa).

It belongs to the bacterial ribosomal protein bL20 family.

It is found in the plastid. The protein resides in the chloroplast. Functionally, binds directly to 23S ribosomal RNA and is necessary for the in vitro assembly process of the 50S ribosomal subunit. It is not involved in the protein synthesizing functions of that subunit. In Drimys granadensis, this protein is Large ribosomal subunit protein bL20c.